The primary structure comprises 962 residues: Exportin-T (962 aa).

The residue at position 1 (M1) is an N-acetylmethionine. Residue K634 is modified to N6-acetyllysine.

In terms of assembly, found in a complex with XPOT, Ran and tRNA. Probably found in a complex with nucleoporins. Interacts with Ran and tRNA in a GTP-dependent manner.

The protein localises to the nucleus. Its subcellular location is the cytoplasm. Functionally, mediates the nuclear export of aminoacylated tRNAs. In the nucleus binds to tRNA and to the GTPase Ran in its active GTP-bound form. Docking of this trimeric complex to the nuclear pore complex (NPC) is mediated through binding to nucleoporins. Upon transit of a nuclear export complex into the cytoplasm, disassembling of the complex and hydrolysis of Ran-GTP to Ran-GDP (induced by RANBP1 and RANGAP1, respectively) cause release of the tRNA from the export receptor. XPOT then return to the nuclear compartment and mediate another round of transport. The directionality of nuclear export is thought to be conferred by an asymmetric distribution of the GTP- and GDP-bound forms of Ran between the cytoplasm and nucleus. This Pongo abelii (Sumatran orangutan) protein is Exportin-T (XPOT).